We begin with the raw amino-acid sequence, 207 residues long: Intraflagellar transport protein 43 homolog A (207 aa).

The tract at residues 1–104 is disordered; it reads MDDNLQLGDS…GSDDEGDIPV (104 aa).

This sequence belongs to the IFT43 family. As to quaternary structure, component of IFT complex A.

Functionally, component of IFT complex A (IFT-A) involved in retrograde ciliary transport along microtubules from the ciliary tip to the base. This Salmo salar (Atlantic salmon) protein is Intraflagellar transport protein 43 homolog A (ift43a).